A 600-amino-acid chain; its full sequence is Na(+)/dicarboxylate cotransporter 3 (600 aa).

Residues 1-16 lie on the Cytoplasmic side of the membrane; sequence MAALAALAKKVWSARR. The helical transmembrane segment at 17 to 37 threads the bilayer; it reads LLVLLLVPLALLPILFALPPK. Residues 38 to 55 lie on the Extracellular side of the membrane; it reads EGRCLYVILLMAVYWCTE. Residues 56–76 traverse the membrane as a helical segment; it reads ALPLSVTALLPIILFPFMGIL. At 77 to 82 the chain is on the cytoplasmic side; it reads PSSKVC. A helical transmembrane segment spans residues 83–103; that stretch reads PQYFLDTNFLFLSGLIMASAI. Residues 104-137 are Extracellular-facing; that stretch reads EEWNLHRRIALKVLMLVGVQPARLILGMMVTTSF. The chain crosses the membrane as a helical span at residues 138 to 158; sequence LSMWLSNTASTAMMLPIASAI. The Cytoplasmic segment spans residues 159–229; the sequence is LKSLFGQREA…KEEEHRRNIW (71 aa). The chain crosses the membrane as a helical span at residues 230 to 250; sequence KGFLISIPYSASIGGTATLTG. Over 251 to 278 the chain is Extracellular; the sequence is TAPNLILLGQLKSFFPQCDVVNFGSWFI. A helical transmembrane segment spans residues 279-299; that stretch reads FAFPLMLLFLLVGWLWISFLY. Topologically, residues 300–336 are cytoplasmic; that stretch reads GGMSWRSWRKKKSKIRADAEDQAKAVIQEEFQNLGPI. A helical transmembrane segment spans residues 337 to 357; it reads KFAEQAVFILFCTFAILLFSR. Over 358-372 the chain is Extracellular; that stretch reads DPKFIPGWASLFAPG. Residues 373–393 form a helical membrane-spanning segment; the sequence is FVSDAVTGVAIVTILFFFPSQ. Over 394 to 422 the chain is Cytoplasmic; that stretch reads KPSLKWWFDFKAPNSETEPLLSWKKAQET. An intramembrane region (helical) is located at residues 423 to 443; it reads VPWNIILLLGGGFAMAKGCEE. Topologically, residues 444-461 are cytoplasmic; it reads SGLSAWIGGQLHPLEHVP. The helical transmembrane segment at 462-482 threads the bilayer; it reads PLLAVLLITVVIAFFTEFASN. The Extracellular portion of the chain corresponds to 483–505; the sequence is TATIIIFLPVLAELAIRLHVHPL. Residues 506 to 526 form a helical membrane-spanning segment; the sequence is YLMIPGTVGCSYAFMLPVSTP. Over 527 to 546 the chain is Cytoplasmic; that stretch reads PNSIAFSTGHLLVKDMVRTG. The chain crosses the membrane as a helical span at residues 547 to 567; the sequence is LLMNLMGVLLLSLAMNTWAQT. The Extracellular portion of the chain corresponds to 568–600; that stretch reads IFQLGTFPDWANTHAANATALPPALTNNTVQTF. Residues Asn-584 and Asn-594 are each glycosylated (N-linked (GlcNAc...) asparagine).

The protein belongs to the SLC13A/DASS transporter (TC 2.A.47) family. NADC subfamily. Highly expressed in kidney, and at much lower levels in brain.

It is found in the cell membrane. The enzyme catalyses succinate(out) + 3 Na(+)(out) = succinate(in) + 3 Na(+)(in). It catalyses the reaction 2-oxoglutarate(out) + 3 Na(+)(out) = 2-oxoglutarate(in) + 3 Na(+)(in). It carries out the reaction N-acetyl-L-aspartate(out) + 3 Na(+)(out) = N-acetyl-L-aspartate(in) + 3 Na(+)(in). The catalysed reaction is fumarate(out) + 3 Na(+)(out) = fumarate(in) + 3 Na(+)(in). The enzyme catalyses glutarate(out) + 3 Na(+)(out) = glutarate(in) + 3 Na(+)(in). It catalyses the reaction 2,2-dimethylsuccinate(out) + 3 Na(+)(out) = 2,2-dimethylsuccinate(in) + 3 Na(+)(in). It carries out the reaction 2,3-dimethylsuccinate(out) + 3 Na(+)(out) = 2,3-dimethylsuccinate(in) + 3 Na(+)(in). The catalysed reaction is malate(out) + 3 Na(+)(out) = malate(in) + 3 Na(+)(in). The enzyme catalyses itaconate(out) + 3 Na(+)(out) = itaconate(in) + 3 Na(+)(in). In terms of biological role, high-affinity sodium-dicarboxylate cotransporter that accepts a range of substrates with 4-6 carbon atoms, such as the citric acid cycle intermediates succinate and alpha-ketoglutarate (2-oxoglutarate), as well as other compounds including N-acetyl-L-aspartate. Transports the dicarboxylate into the cell with a probable stoichiometry of 3 Na(+) for 1 divalent dicarboxylate, rendering the process electrogenic. Can transport citrate in a Na(+)-dependent manner, recognizing the divalent form of citrate rather than the trivalent form which is normally found in blood. Imports itaconate in hepatocytes leading to activation of TFEB-dependent lysosomal biogenesis involved in antibacterial innate immune response. The chain is Na(+)/dicarboxylate cotransporter 3 (Slc13a3) from Mus musculus (Mouse).